We begin with the raw amino-acid sequence, 240 residues long: Aliphatic sulfonates import ATP-binding protein SsuB 2 (240 aa).

The ABC transporter domain maps to 2–218 (VRTRELRRGF…RHSAPEFIHA (217 aa)). ATP is bound at residue 34–41 (GRSGSGKS).

This sequence belongs to the ABC transporter superfamily. Aliphatic sulfonates importer (TC 3.A.1.17.2) family. The complex is composed of two ATP-binding proteins (SsuB), two transmembrane proteins (SsuC) and a solute-binding protein (SsuA).

It is found in the cell membrane. The enzyme catalyses ATP + H2O + aliphatic sulfonate-[sulfonate-binding protein]Side 1 = ADP + phosphate + aliphatic sulfonateSide 2 + [sulfonate-binding protein]Side 1.. Its function is as follows. Part of the ABC transporter complex SsuABC involved in aliphatic sulfonates import. Responsible for energy coupling to the transport system. This Nocardia farcinica (strain IFM 10152) protein is Aliphatic sulfonates import ATP-binding protein SsuB 2.